Consider the following 242-residue polypeptide: uncharacterized protein (242 aa).

Positions 3–116 (TALVIDDEPF…RLRKTVKRLS (114 aa)) constitute a Response regulatory domain. At Asp-54 the chain carries 4-aspartylphosphate. In terms of domain architecture, HTH LytTR-type spans 139 to 240 (IPCIGHNRIV…LKLLKEMLGL (102 aa)).

This is an uncharacterized protein from Vibrio vulnificus (strain CMCP6).